A 61-amino-acid chain; its full sequence is MAKTALKNKAAGKPKFKVRAYTRCQVCGRPHSVYRKFGLCRICLREKAHRGELPGVTKSSW.

Residues cysteine 24, cysteine 27, cysteine 40, and cysteine 43 each contribute to the Zn(2+) site.

The protein belongs to the universal ribosomal protein uS14 family. Zinc-binding uS14 subfamily. In terms of assembly, part of the 30S ribosomal subunit. Contacts proteins S3 and S10. Requires Zn(2+) as cofactor.

Its function is as follows. Binds 16S rRNA, required for the assembly of 30S particles and may also be responsible for determining the conformation of the 16S rRNA at the A site. The chain is Small ribosomal subunit protein uS14 from Bifidobacterium longum (strain DJO10A).